We begin with the raw amino-acid sequence, 352 residues long: N-acetyl-gamma-glutamyl-phosphate reductase (352 aa).

The active site involves C155.

This sequence belongs to the NAGSA dehydrogenase family. Type 1 subfamily.

It localises to the cytoplasm. The enzyme catalyses N-acetyl-L-glutamate 5-semialdehyde + phosphate + NADP(+) = N-acetyl-L-glutamyl 5-phosphate + NADPH + H(+). It participates in amino-acid biosynthesis; L-arginine biosynthesis; N(2)-acetyl-L-ornithine from L-glutamate: step 3/4. Its function is as follows. Catalyzes the NADPH-dependent reduction of N-acetyl-5-glutamyl phosphate to yield N-acetyl-L-glutamate 5-semialdehyde. The protein is N-acetyl-gamma-glutamyl-phosphate reductase of Picosynechococcus sp. (strain ATCC 27264 / PCC 7002 / PR-6) (Agmenellum quadruplicatum).